We begin with the raw amino-acid sequence, 277 residues long: NH(3)-dependent NAD(+) synthetase (277 aa).

47 to 54 (GISGGQDS) serves as a coordination point for ATP. Aspartate 53 lines the Mg(2+) pocket. Arginine 141 contributes to the deamido-NAD(+) binding site. Threonine 161 is an ATP binding site. Glutamate 166 provides a ligand contact to Mg(2+). Lysine 174 and aspartate 181 together coordinate deamido-NAD(+). ATP contacts are provided by lysine 190 and threonine 212. A deamido-NAD(+)-binding site is contributed by 261–262 (HK).

It belongs to the NAD synthetase family. In terms of assembly, homodimer.

It carries out the reaction deamido-NAD(+) + NH4(+) + ATP = AMP + diphosphate + NAD(+) + H(+). The protein operates within cofactor biosynthesis; NAD(+) biosynthesis; NAD(+) from deamido-NAD(+) (ammonia route): step 1/1. Functionally, catalyzes the ATP-dependent amidation of deamido-NAD to form NAD. Uses ammonia as a nitrogen source. The sequence is that of NH(3)-dependent NAD(+) synthetase from Lactobacillus gasseri (strain ATCC 33323 / DSM 20243 / BCRC 14619 / CIP 102991 / JCM 1131 / KCTC 3163 / NCIMB 11718 / NCTC 13722 / AM63).